A 309-amino-acid polypeptide reads, in one-letter code: Probable nitrogen assimilation transcriptional activator (309 aa).

An HTH lysR-type domain is found at 1 to 57 (MRLEQLQAFLKVAELGSFQQAALQSEVTQSTISRQIQGLESALKCQLFHRGAQAKLT). Residues 18-38 (FQQAALQSEVTQSTISRQIQG) constitute a DNA-binding region (H-T-H motif).

It belongs to the LysR transcriptional regulatory family.

Seems to regulate utilization of fixed nitrogen by controlling the expression of a certain gene(s) involved in nitrogen metabolism. This chain is Probable nitrogen assimilation transcriptional activator (ntcB), found in Synechocystis sp. (strain ATCC 27184 / PCC 6803 / Kazusa).